A 461-amino-acid polypeptide reads, in one-letter code: Integrator complex subunit 12 (461 aa).

The segment at 42 to 131 is disordered; it reads GIDSSYRPTQ…PETRSSPITV (90 aa). Lys-68 participates in a covalent cross-link: Glycyl lysine isopeptide (Lys-Gly) (interchain with G-Cter in SUMO2). Over residues 88-124 the composition is skewed to basic and acidic residues; that stretch reads TAEKIKKEAEKRPADKMKDVTEGIDVPKKPRLEKPET. Ser-127 carries the post-translational modification Phosphoserine. The segment at 158-214 adopts a PHD-type zinc-finger fold; that stretch reads GLACVVCRQMTVASGNQLVECQECHNLYHQDCHKPQVTDKEVNDPRLVWYCARCTRQ. Residue Lys-253 forms a Glycyl lysine isopeptide (Lys-Gly) (interchain with G-Cter in SUMO2) linkage. Positions 302–328 are enriched in polar residues; that stretch reads AGPSTAKLNSAAQNSSGKPAASSSNQK. The interval 302 to 443 is disordered; sequence AGPSTAKLNS…PTSQESQLNA (142 aa). 2 stretches are compositionally biased toward low complexity: residues 348–357 and 381–436; these read GSGNSTSPSV and VSKV…GPTS.

The protein belongs to the Integrator subunit 12 family. Component of the Integrator complex, composed of core subunits INTS1, INTS2, INTS3, INTS4, INTS5, INTS6, INTS7, INTS8, INTS9/RC74, INTS10, INTS11/CPSF3L, INTS12, INTS13, INTS14 and INTS15. The core complex associates with protein phosphatase 2A subunits PPP2CA and PPP2R1A, to form the Integrator-PP2A (INTAC) complex. Post-translationally, dephosphorylated at Ser-127 by the PNUTS-PP1 complex, promoting RNA polymerase II transcription pause-release.

It is found in the nucleus. Component of the integrator complex, a multiprotein complex that terminates RNA polymerase II (Pol II) transcription in the promoter-proximal region of genes. The integrator complex provides a quality checkpoint during transcription elongation by driving premature transcription termination of transcripts that are unfavorably configured for transcriptional elongation: the complex terminates transcription by (1) catalyzing dephosphorylation of the C-terminal domain (CTD) of Pol II subunit POLR2A/RPB1 and SUPT5H/SPT5, (2) degrading the exiting nascent RNA transcript via endonuclease activity and (3) promoting the release of Pol II from bound DNA. The integrator complex is also involved in terminating the synthesis of non-coding Pol II transcripts, such as enhancer RNAs (eRNAs), small nuclear RNAs (snRNAs), telomerase RNAs and long non-coding RNAs (lncRNAs). Mediates recruitment of cytoplasmic dynein to the nuclear envelope, probably as component of the integrator complex. This is Integrator complex subunit 12 (Ints12) from Mus musculus (Mouse).